A 104-amino-acid polypeptide reads, in one-letter code: Putative zinc finger protein ORF104b (104 aa).

Residues 62 to 85 form a C2H2-type zinc finger; sequence YECKYCHTRYLSHTGIVYHLEREH.

The sequence is that of Putative zinc finger protein ORF104b from Acidianus sp. F28 (AFV-2).